A 699-amino-acid chain; its full sequence is MNLLPKSSKEFGSVDYWEKFFQQRGKKAFEWYGTYLELCGVLHKYIKPREKVLVVGCGNSELSEQLYDVGYQDIVNIDISEVVIKQMKERNASRRPRMSFLKMDMTQMEFPDASFQVVLDKGTLDAVLTDEEEKTLQQVDRMLAEVGRVLQVGGRYLCISLAQAHVLKKAVGHFSREGWMVRVHQVASSQDQLLEAEPRFSLPVFAFIMTKFRPVTGSALQIFELCAQEQGKPVRLESAEQLAEAVRERQQYAWLCSQLYRKAGLGSVSLDLCNGDTGEPRYTLHVVDSPTVKPSRDNHFAIFIIPQGRETEWLFGMEEGRKQLAASAGFRRLITVALHRGQQYEGMDSIQAELSARVMELAPAGMPAQLQVPFLSVGGDIGVRIVQHQACSPLSGDYVIEDVQGDDKRYFRRLIFLSNRNVVQSEARLLQDVSHRAQKKRKKDRKKHRPADTPEDLPAAQGQSIDKSYLCCEHHKAMIAGLALLKNPELLLETPLALLVVGLGGGSLPLFIHDHFPKSCIHAVEIDPSMLEVATQWFGFSQSDRMKVHIADGLDFITRLAEEEARPHYDVIMFDVDSKDPTLGMSCPPPAFVAQLFLQKVKSILTPEGVFILNLVCRDLGLKDSVLAGLKAVFPLLYVRRIEGEVNEILFCQLHSECKLATPELLEMARALEQTLRKPGKGWDDTYVLSDMLNTVKIV.

M1 bears the N-acetylmethionine mark. A Phosphoserine modification is found at S267. Positions V433 to A460 are disordered. Residues R436–R449 are compositionally biased toward basic residues.

Belongs to the methyltransferase superfamily. As to quaternary structure, forms a tripartite complex containing GAB1, METTL13 and SPRY2. Within the complex interacts with GAB1 and SPRY2.

Its subcellular location is the cytoplasm. It is found in the nucleus. It localises to the mitochondrion. The enzyme catalyses L-lysyl-[protein] + S-adenosyl-L-methionine = N(6)-methyl-L-lysyl-[protein] + S-adenosyl-L-homocysteine + H(+). It catalyses the reaction N(6)-methyl-L-lysyl-[protein] + S-adenosyl-L-methionine = N(6),N(6)-dimethyl-L-lysyl-[protein] + S-adenosyl-L-homocysteine + H(+). It carries out the reaction N-terminal glycyl-L-lysyl-L-glutamyl-[protein] + 3 S-adenosyl-L-methionine = N-terminal N,N,N-trimethyl-glycyl-L-lysyl-L-glutamyl-[protein] + 3 S-adenosyl-L-homocysteine + 3 H(+). Its function is as follows. Dual methyltransferase that catalyzes methylation of elongation factor 1-alpha (EEF1A1 and EEF1A2) at two different positions, and is therefore involved in the regulation of mRNA translation. Via its C-terminus, methylates EEF1A1 and EEF1A2 at the N-terminal residue 'Gly-2'. Via its N-terminus dimethylates EEF1A1 and EEF1A2 at residue 'Lys-55'. Has no activity towards core histones H2A, H2B, H3 and H4. This Bos taurus (Bovine) protein is eEF1A lysine and N-terminal methyltransferase (METTL13).